Consider the following 323-residue polypeptide: Cysteine synthase A (323 aa).

The hydrogen sulfide site is built by Asn8 and Arg35. Position 42 is an N6-(pyridoxal phosphate)lysine (Lys42). Residues Asn72 and 177–181 (GTGGT) each bind pyridoxal 5'-phosphate. Leu269 lines the hydrogen sulfide pocket. Ser273 is a pyridoxal 5'-phosphate binding site.

The protein belongs to the cysteine synthase/cystathionine beta-synthase family. Homodimer. Pyridoxal 5'-phosphate is required as a cofactor.

It catalyses the reaction O-acetyl-L-serine + hydrogen sulfide = L-cysteine + acetate. Its pathway is amino-acid biosynthesis; L-cysteine biosynthesis; L-cysteine from L-serine: step 2/2. This is Cysteine synthase A (cysK) from Escherichia coli O157:H7.